Reading from the N-terminus, the 264-residue chain is Glutamate racemase (264 aa).

Residues 10–11 and 42–43 contribute to the substrate site; these read DS and YG. Residue C73 is the Proton donor/acceptor of the active site. 74 to 75 serves as a coordination point for substrate; it reads NT. Catalysis depends on C183, which acts as the Proton donor/acceptor. Residue 184 to 185 coordinates substrate; sequence TH.

This sequence belongs to the aspartate/glutamate racemases family.

It catalyses the reaction L-glutamate = D-glutamate. Its pathway is cell wall biogenesis; peptidoglycan biosynthesis. In terms of biological role, provides the (R)-glutamate required for cell wall biosynthesis. This chain is Glutamate racemase, found in Streptococcus mutans serotype c (strain ATCC 700610 / UA159).